A 168-amino-acid polypeptide reads, in one-letter code: Transcriptional regulator MraZ (168 aa).

SpoVT-AbrB domains follow at residues 8-51 and 90-140; these read EYNQ…GGDR and ALNM…KADT.

It belongs to the MraZ family. As to quaternary structure, forms oligomers.

The protein localises to the cytoplasm. The protein resides in the nucleoid. This is Transcriptional regulator MraZ from Cereibacter sphaeroides (strain ATCC 17029 / ATH 2.4.9) (Rhodobacter sphaeroides).